The following is a 100-amino-acid chain: Vesicle-associated membrane protein 8 (100 aa).

At Met-1 the chain carries N-acetylmethionine. The Cytoplasmic segment spans residues 1 to 75; sequence MEEASEGGGN…ARKFWWKNVK (75 aa). Ser-5 and Ser-18 each carry phosphoserine. Residues 12–72 enclose the v-SNARE coiled-coil homology domain; that stretch reads RVRNLQSEVE…QKVARKFWWK (61 aa). Phosphothreonine is present on residues Thr-28, Thr-48, and Thr-54. A Phosphoserine modification is found at Ser-55. Residues Lys-64 and Lys-68 are each lipidated ((Microbial infection) N6-stearoyl lysine). The chain crosses the membrane as a helical; Anchor for type IV membrane protein span at residues 76 to 96; it reads MIVLICVIVFIIILFIVLFAT. Residues 97–100 lie on the Vesicular side of the membrane; that stretch reads GAFS.

It belongs to the synaptobrevin family. As to quaternary structure, forms a SNARE complex composed of VAMP8, SNAP29 and STX17 involved in fusion of autophagosome with lysosome. Found in a number of SNARE complexes with NAPA, SNAP23, SNAP25, STX1A, STX4, STX7, STX8 and VTI1B. Interacts with PICALM. SNARE complex formation and binding by PICALM are mutually exclusive processes for VAMP8. Interacts with SBF2/MTMR13. Interacts with RAB21 (in GTP-bound form) in response to starvation; the interaction probably regulates VAMP8 endolysosomal trafficking. Interacts with STX17; this interaction is increased in the absence of TMEM39A. Interacts with TRIM6. In terms of assembly, (Microbial infection) The interaction with STX17 is decreased in presence of SARS coronavirus-2/SARS-CoV-2 ORF3A protein. Post-translationally, (Microbial infection) Stearoylated By S.flexneri N-epsilon-fatty acyltransferase IcsB, thereby disrupting the host actin cytoskeleton. Platelets.

The protein resides in the lysosome membrane. The protein localises to the early endosome membrane. Its subcellular location is the late endosome membrane. It localises to the cell membrane. It is found in the zymogen granule membrane. In terms of biological role, SNAREs, soluble N-ethylmaleimide-sensitive factor-attachment protein receptors, are essential proteins for fusion of cellular membranes. SNAREs localized on opposing membranes assemble to form a trans-SNARE complex, an extended, parallel four alpha-helical bundle that drives membrane fusion. VAMP8 is a SNARE involved in autophagy through the direct control of autophagosome membrane fusion with the lysososome membrane via its interaction with the STX17-SNAP29 binary t-SNARE complex. Also required for dense-granule secretion in platelets. Also plays a role in regulated enzyme secretion in pancreatic acinar cells. Involved in the abscission of the midbody during cell division, which leads to completely separate daughter cells. Involved in the homotypic fusion of early and late endosomes. Also participates in the activation of type I interferon antiviral response through a TRIM6-dependent mechanism. The sequence is that of Vesicle-associated membrane protein 8 from Homo sapiens (Human).